We begin with the raw amino-acid sequence, 54 residues long: Hydrophobic protein RCI2A (54 aa).

Helical transmembrane passes span 2–22 (STATFVDIIIAILLPPLGVFL) and 32–52 (ICLVLTLLGYIPGIIYAIYVL).

Belongs to the UPF0057 (PMP3) family.

It localises to the membrane. The protein is Hydrophobic protein RCI2A (RCI2A) of Arabidopsis thaliana (Mouse-ear cress).